The sequence spans 245 residues: DNA repair protein RecO (245 aa).

The protein belongs to the RecO family.

Functionally, involved in DNA repair and RecF pathway recombination. This chain is DNA repair protein RecO, found in Porphyromonas gingivalis (strain ATCC BAA-308 / W83).